Reading from the N-terminus, the 209-residue chain is MANEIPDLECQVRAGTGKGAARAARRANLVPGVVFGGDADPLAIQIPYNVLLKRLKAGRFKSTLFNLKVEGHDDVRVICRDVQRDVVKDLPTHFDLMRLRRTSKINLFIPVEFINEEECVGLKRGGVLTVVRAEVELVVTAGDIPEKLTVDLTGKAIGDVIHISDVTLPEGSKPTIDRDFVIANISAPSGLKSADDEAEGEDAEEAAAE.

The interval 190–209 (GLKSADDEAEGEDAEEAAAE) is disordered. The span at 196-209 (DEAEGEDAEEAAAE) shows a compositional bias: acidic residues.

This sequence belongs to the bacterial ribosomal protein bL25 family. CTC subfamily. Part of the 50S ribosomal subunit; part of the 5S rRNA/L5/L18/L25 subcomplex. Contacts the 5S rRNA. Binds to the 5S rRNA independently of L5 and L18.

In terms of biological role, this is one of the proteins that binds to the 5S RNA in the ribosome where it forms part of the central protuberance. The chain is Large ribosomal subunit protein bL25 from Ruegeria sp. (strain TM1040) (Silicibacter sp.).